We begin with the raw amino-acid sequence, 997 residues long: Mannuronan C5-epimerase AlgE2 (997 aa).

7 PbH1 repeats span residues 133-155 (DRDVTLERVEIREMSGYGFDPHE), 157-179 (TINLTIRDSVAHDNGLDGFVADF), 180-202 (QIGGVFENNVSYNNDRHGFNIVT), 204-226 (TNDFVLSNNVAYGNGGAGLVVQR), 257-279 (AHDVTLQNAEIYGNGLYGVRVYG), 280-315 (AEDVQILDNYIHDNSQNGSYAEILLQSYDDTAGVSG), and 320-359 (TTGTWIEGNTIVGSANSTYGIQERDDGTDYSSLYANSVSN). 10 Hemolysin-type calcium-binding repeats span residues 388–403 (GTAGNDTLGGSDAHET), 406–422 (GLDGNDRLNGGAGNDIL), 424–439 (GGAGRDNLTGGAGADL), 557–573 (GHAGNDTLDGGAGDDIL), 574–591 (VGGAGRDSLTGGAGADVF), 696–711 (GSAGNDSLQGTAADEV), 713–730 (HGGGGRDTLAGGAGADVF), 828–839 (GGDGNDTLSGSS), 846–862 (GGVGNDSLDGGAGNDIL), and 864–880 (GGAGRDTLSGGSGSDIF).

It belongs to the D-mannuronate C5-epimerase family. It depends on Ca(2+) as a cofactor.

It is found in the secreted. It carries out the reaction [(1-&gt;4)-beta-D-mannuronosyl](n) = [alginate](n). It functions in the pathway glycan biosynthesis; alginate biosynthesis. Inhibited by zinc. In terms of biological role, converts beta-D-mannuronic acid (M) to alpha-L-guluronic acid (G), producing a polymer with gel-forming capacity, required for the formation of the cyst coat. The chain is Mannuronan C5-epimerase AlgE2 from Azotobacter vinelandii.